Reading from the N-terminus, the 215-residue chain is uncharacterized protein (215 aa).

An N-terminal signal peptide occupies residues 1-17 (MKKVLASATILSLMLVG). A disordered region spans residues 17–110 (GCSNGGNDES…NKQQQSVQDN (94 aa)). Cys18 carries the N-palmitoyl cysteine lipid modification. Cys18 is lipidated: S-diacylglycerol cysteine. Over residues 25–69 (ESSHKDDSSKTEQKDKSSSQHDSKKDSKRNDTNNKQDNQENKSNK) the composition is skewed to basic and acidic residues. The segment covering 70-95 (EQTSNQNSNAGEQRTSERPTTNSNGI) has biased composition (polar residues). Residues 96 to 110 (SSDNQNKQQQSVQDN) show a composition bias toward low complexity.

It is found in the cell membrane. This is an uncharacterized protein from Staphylococcus epidermidis (strain ATCC 12228 / FDA PCI 1200).